We begin with the raw amino-acid sequence, 25 residues long: Plasticin-L1 (25 aa).

Belongs to the frog skin active peptide (FSAP) family. Plasticin subfamily. In terms of tissue distribution, expressed by the skin glands.

It localises to the secreted. It is found in the target cell membrane. Functionally, may play an immunomodulatory role in frog skin in response to microbial pathogens, since it increases the production of the pro-inflammatory cytokines TNF-alpha, IL-1 beta, IL-12, and IL-23 by mouse peritoneal macrophages and has no effect on the production of the anti-inflammatory cytokine IL-10. It is not known whether stimulation of cytokine production arises from a non-specific interaction of the peptide with the macrophage membrane or from interaction with a specific receptor. Shows a low activity in stimulating insulin release from rat BRIN-BD11 beta cells, and acts without loss of integrity of the plasma membrane. Shows a marked affinity for both neutral and anionic membranes models. Does not show antibacterial (E.coli and S.aureus). Does not show hemolytic activity against human erythrocytes. The chain is Plasticin-L1 from Leptodactylus laticeps (Santa Fe frog).